A 107-amino-acid polypeptide reads, in one-letter code: Phosphoribosyl-ATP pyrophosphatase (107 aa).

Belongs to the PRA-PH family.

It localises to the cytoplasm. The enzyme catalyses 1-(5-phospho-beta-D-ribosyl)-ATP + H2O = 1-(5-phospho-beta-D-ribosyl)-5'-AMP + diphosphate + H(+). It functions in the pathway amino-acid biosynthesis; L-histidine biosynthesis; L-histidine from 5-phospho-alpha-D-ribose 1-diphosphate: step 2/9. The chain is Phosphoribosyl-ATP pyrophosphatase (hisE) from Caulobacter vibrioides (strain ATCC 19089 / CIP 103742 / CB 15) (Caulobacter crescentus).